Reading from the N-terminus, the 143-residue chain is Large ribosomal subunit protein uL15 (143 aa).

The tract at residues 1 to 51 (MELNGIKPAAGAKHAKRRVGRGIGSGIGKTAGRGHKGQKSRAGGFHKVGFE) is disordered. A compositionally biased stretch (gly residues) spans 21 to 31 (RGIGSGIGKTA).

The protein belongs to the universal ribosomal protein uL15 family. As to quaternary structure, part of the 50S ribosomal subunit.

Functionally, binds to the 23S rRNA. This chain is Large ribosomal subunit protein uL15, found in Variovorax paradoxus (strain S110).